The sequence spans 891 residues: DNA mismatch repair protein MutS (891 aa).

634–641 (GPNMGGKS) lines the ATP pocket.

It belongs to the DNA mismatch repair MutS family.

Its function is as follows. This protein is involved in the repair of mismatches in DNA. It is possible that it carries out the mismatch recognition step. This protein has a weak ATPase activity. The chain is DNA mismatch repair protein MutS from Burkholderia pseudomallei (strain 668).